The following is a 238-amino-acid chain: Ribonuclease PH (238 aa).

Phosphate is bound by residues Arg86 and 124 to 126 (GTR).

The protein belongs to the RNase PH family. As to quaternary structure, homohexameric ring arranged as a trimer of dimers.

The catalysed reaction is tRNA(n+1) + phosphate = tRNA(n) + a ribonucleoside 5'-diphosphate. In terms of biological role, phosphorolytic 3'-5' exoribonuclease that plays an important role in tRNA 3'-end maturation. Removes nucleotide residues following the 3'-CCA terminus of tRNAs; can also add nucleotides to the ends of RNA molecules by using nucleoside diphosphates as substrates, but this may not be physiologically important. Probably plays a role in initiation of 16S rRNA degradation (leading to ribosome degradation) during starvation. This is Ribonuclease PH from Solibacter usitatus (strain Ellin6076).